We begin with the raw amino-acid sequence, 482 residues long: Aspartyl/glutamyl-tRNA(Asn/Gln) amidotransferase subunit B (482 aa).

It belongs to the GatB/GatE family. GatB subfamily. Heterotrimer of A, B and C subunits.

It carries out the reaction L-glutamyl-tRNA(Gln) + L-glutamine + ATP + H2O = L-glutaminyl-tRNA(Gln) + L-glutamate + ADP + phosphate + H(+). The catalysed reaction is L-aspartyl-tRNA(Asn) + L-glutamine + ATP + H2O = L-asparaginyl-tRNA(Asn) + L-glutamate + ADP + phosphate + 2 H(+). In terms of biological role, allows the formation of correctly charged Asn-tRNA(Asn) or Gln-tRNA(Gln) through the transamidation of misacylated Asp-tRNA(Asn) or Glu-tRNA(Gln) in organisms which lack either or both of asparaginyl-tRNA or glutaminyl-tRNA synthetases. The reaction takes place in the presence of glutamine and ATP through an activated phospho-Asp-tRNA(Asn) or phospho-Glu-tRNA(Gln). The protein is Aspartyl/glutamyl-tRNA(Asn/Gln) amidotransferase subunit B of Ehrlichia canis (strain Jake).